Consider the following 818-residue polypeptide: Beta-glucosidase (818 aa).

Residue Asp222 is part of the active site. The PA14 domain maps to 386-538 (VFSGEMTVEY…GDAGIAEAVE (153 aa)).

The protein belongs to the glycosyl hydrolase 3 family.

The protein localises to the cytoplasm. It catalyses the reaction Hydrolysis of terminal, non-reducing beta-D-glucosyl residues with release of beta-D-glucose.. Its function is as follows. Involved in modifying a vir-inducing plant signal molecule. Hydrolyzes coniferin but not cellobiose. The sequence is that of Beta-glucosidase (cbg-1) from Rhizobium radiobacter (Agrobacterium tumefaciens).